We begin with the raw amino-acid sequence, 316 residues long: Pantothenate kinase (316 aa).

Residue 95-102 participates in ATP binding; it reads GSVAVGKS.

It belongs to the prokaryotic pantothenate kinase family.

The protein resides in the cytoplasm. The catalysed reaction is (R)-pantothenate + ATP = (R)-4'-phosphopantothenate + ADP + H(+). The protein operates within cofactor biosynthesis; coenzyme A biosynthesis; CoA from (R)-pantothenate: step 1/5. The chain is Pantothenate kinase from Shewanella loihica (strain ATCC BAA-1088 / PV-4).